Reading from the N-terminus, the 133-residue chain is Ribosome-binding factor A (133 aa).

This sequence belongs to the RbfA family. In terms of assembly, monomer. Binds 30S ribosomal subunits, but not 50S ribosomal subunits or 70S ribosomes.

It localises to the cytoplasm. Its function is as follows. One of several proteins that assist in the late maturation steps of the functional core of the 30S ribosomal subunit. Associates with free 30S ribosomal subunits (but not with 30S subunits that are part of 70S ribosomes or polysomes). Required for efficient processing of 16S rRNA. May interact with the 5'-terminal helix region of 16S rRNA. This Chelativorans sp. (strain BNC1) protein is Ribosome-binding factor A.